A 561-amino-acid chain; its full sequence is Thymidine kinase (561 aa).

Composition is skewed to polar residues over residues 1 to 14 (MASN…TPRR) and 112 to 122 (LSSSNTASGLR). Disordered regions lie at residues 1–22 (MASN…VPKA) and 34–122 (FLTQ…SGLR). 245 to 252 (GCMAAGKT) serves as a coordination point for ATP. The active-site Proton acceptor is E272. Q310 serves as a coordination point for substrate. ATP is bound at residue R400. R406 lines the substrate pocket.

It belongs to the herpesviridae thymidine kinase family. As to quaternary structure, homodimer.

It carries out the reaction thymidine + ATP = dTMP + ADP + H(+). Its function is as follows. Catalyzes the transfer of the gamma-phospho group of ATP to thymidine to generate dTMP in the salvage pathway of pyrimidine synthesis. The dTMP serves as a substrate for DNA polymerase during viral DNA replication. Allows the virus to be reactivated and to grow in non-proliferative cells lacking a high concentration of phosphorylated nucleic acid precursors. This chain is Thymidine kinase, found in Connochaetes taurinus (Blue wildebeest).